The following is a 428-amino-acid chain: Serine--tRNA ligase (428 aa).

235 to 237 (TAE) serves as a coordination point for L-serine. ATP is bound at residue 266–268 (RSE). Glu289 is a binding site for L-serine. ATP is bound at residue 353–356 (EISS). L-serine is bound at residue Ser389.

This sequence belongs to the class-II aminoacyl-tRNA synthetase family. Type-1 seryl-tRNA synthetase subfamily. In terms of assembly, homodimer. The tRNA molecule binds across the dimer.

Its subcellular location is the cytoplasm. It carries out the reaction tRNA(Ser) + L-serine + ATP = L-seryl-tRNA(Ser) + AMP + diphosphate + H(+). It catalyses the reaction tRNA(Sec) + L-serine + ATP = L-seryl-tRNA(Sec) + AMP + diphosphate + H(+). It participates in aminoacyl-tRNA biosynthesis; selenocysteinyl-tRNA(Sec) biosynthesis; L-seryl-tRNA(Sec) from L-serine and tRNA(Sec): step 1/1. Its function is as follows. Catalyzes the attachment of serine to tRNA(Ser). Is also able to aminoacylate tRNA(Sec) with serine, to form the misacylated tRNA L-seryl-tRNA(Sec), which will be further converted into selenocysteinyl-tRNA(Sec). The sequence is that of Serine--tRNA ligase from Shewanella baltica (strain OS185).